Consider the following 213-residue polypeptide: Anti-sigma-W factor RsiW (213 aa).

Over 1–86 (MSCEQHYRTL…TNRFKVWMRR (86 aa)) the chain is Cytoplasmic. Residues His-30, Cys-34, and Cys-37 each coordinate Zn(2+). A helical membrane pass occupies residues 87 to 109 (YPLAVAAAVFVLLMSTSLFSMWS). The Extracellular portion of the chain corresponds to 110–213 (SDGEHVTVTG…ISDEKNSPSS (104 aa)).

Belongs to the zinc-associated anti-sigma factor (ZAS) superfamily. Anti-sigma-W factor family. Requires Zn(2+) as cofactor. In terms of processing, is processed by three successive proteolytic events. First, the extracellular region of RsiW is cleaved by PrsW (Site-1 cleavage) in response to cell envelope stresses. Next, it undergoes cleavage at an intramembrane site (Site-2 cleavage) mediated by RasP. This cleavage uncovers a cryptic proteolytic tag with conserved alanine residues in the transmembrane segment, that is recognized mainly by the ClpXP protease, which completely degrades the protein in the cytoplasm and leads to the induction of the sigma-W-controlled genes.

It is found in the membrane. Functionally, is the anti-sigma factor for SigW. The presence of RsiW leads to the inactivation of SigW, and its proteolytic destruction to sigma-W activation. The chain is Anti-sigma-W factor RsiW (rsiW) from Halalkalibacterium halodurans (strain ATCC BAA-125 / DSM 18197 / FERM 7344 / JCM 9153 / C-125) (Bacillus halodurans).